We begin with the raw amino-acid sequence, 289 residues long: Digeranylgeranylglyceryl phosphate synthase (289 aa).

Helical transmembrane passes span 17–37 (CLMA…ILTS), 50–70 (LFSS…GNAI), 106–126 (FALG…IALF), 141–161 (TPLL…LFGA), 163–183 (VFGL…ALAI), 221–241 (LIGF…MLGL), 243–263 (YLYL…QLLA), and 269–289 (KSSK…IAGV).

It belongs to the UbiA prenyltransferase family. DGGGP synthase subfamily. Requires Mg(2+) as cofactor.

It is found in the cell membrane. The catalysed reaction is sn-3-O-(geranylgeranyl)glycerol 1-phosphate + (2E,6E,10E)-geranylgeranyl diphosphate = 2,3-bis-O-(geranylgeranyl)-sn-glycerol 1-phosphate + diphosphate. It participates in membrane lipid metabolism; glycerophospholipid metabolism. Its function is as follows. Prenyltransferase that catalyzes the transfer of the geranylgeranyl moiety of geranylgeranyl diphosphate (GGPP) to the C2 hydroxyl of (S)-3-O-geranylgeranylglyceryl phosphate (GGGP). This reaction is the second ether-bond-formation step in the biosynthesis of archaeal membrane lipids. The protein is Digeranylgeranylglyceryl phosphate synthase of Methanosarcina barkeri (strain Fusaro / DSM 804).